The sequence spans 251 residues: Ubiquinone/menaquinone biosynthesis C-methyltransferase UbiE (251 aa).

Residues T74, D95, 123 to 124 (NA), and S140 each bind S-adenosyl-L-methionine.

This sequence belongs to the class I-like SAM-binding methyltransferase superfamily. MenG/UbiE family.

The catalysed reaction is a 2-demethylmenaquinol + S-adenosyl-L-methionine = a menaquinol + S-adenosyl-L-homocysteine + H(+). It catalyses the reaction a 2-methoxy-6-(all-trans-polyprenyl)benzene-1,4-diol + S-adenosyl-L-methionine = a 5-methoxy-2-methyl-3-(all-trans-polyprenyl)benzene-1,4-diol + S-adenosyl-L-homocysteine + H(+). It functions in the pathway quinol/quinone metabolism; menaquinone biosynthesis; menaquinol from 1,4-dihydroxy-2-naphthoate: step 2/2. It participates in cofactor biosynthesis; ubiquinone biosynthesis. Its function is as follows. Methyltransferase required for the conversion of demethylmenaquinol (DMKH2) to menaquinol (MKH2) and the conversion of 2-polyprenyl-6-methoxy-1,4-benzoquinol (DDMQH2) to 2-polyprenyl-3-methyl-6-methoxy-1,4-benzoquinol (DMQH2). The sequence is that of Ubiquinone/menaquinone biosynthesis C-methyltransferase UbiE from Serratia proteamaculans (strain 568).